Reading from the N-terminus, the 418-residue chain is Acyltransferase calJ (418 aa).

The Acyl-ester intermediate role is filled by Ser-79. Positions 176 and 191 each coordinate substrate.

This sequence belongs to the class-A beta-lactamase family.

It functions in the pathway secondary metabolite biosynthesis. In terms of biological role, acyltransferase; part of the gene cluster that mediates the biosynthesis of calbistrin A and related compounds. Calbistrin A is a secondary metabolite with an interesting structure that was recently found to have bioactivity against leukemia cells. It consists of two polyketides linked by an ester bond: a bicyclic decalin containing polyketide and a linear 12 carbon dioic acid structure. The polyketide synthase calA is probably responsible for forming the decalin moiety. Because calA lacks a designated enoylreductase (ER) domain, the required activity is provided by the trans-enoyl reductase calK. Following release from the PKS, calF then probably catalyzes the oxidation and the subsequent Diels Alder cycloisomerization that lead to the formation of the decalin moiety. The decalin polyketide backbone includes two C-methyl groups, at C7 and C11 in backbone, of which the C7 position is probably methylated by the methyltransferase domain of calA. A candidate for adding the methyl group at C11, if not done by CalA, is the cluster methyltransferase calH. Several additional tailoring enzymes within the cluster could be involved in the modification of the decalin polyketide product. Those include the 3 cytochrome P450 monooxygenases CalE, CalG and CalL, of which one might be responsible for the introduction of the extra hydroxyl group attached to the backbone of the decalin moiety, at position C9 in the backbone, that allows for attachment of the linear moiety. One tailoring enzyme activity that is expected to be involved in biosynthesis of calbistrin is an acyltransferase for connecting the two polyketide synthase products, and which could be performed by the cluster acyltransferase calJ. The enzyme responsible for the biosynthesis of the linear moiety, probably a second PKS, has not been identified yet. This is Acyltransferase calJ from Penicillium decumbens.